A 96-amino-acid chain; its full sequence is Protein YdfX (96 aa).

The chain is Protein YdfX (ydfX) from Escherichia coli (strain K12).